A 319-amino-acid chain; its full sequence is Ribosomal RNA small subunit methyltransferase H (319 aa).

Residues 35–37 (AGH), D55, F84, D104, and Q111 contribute to the S-adenosyl-L-methionine site.

This sequence belongs to the methyltransferase superfamily. RsmH family.

It is found in the cytoplasm. The catalysed reaction is cytidine(1402) in 16S rRNA + S-adenosyl-L-methionine = N(4)-methylcytidine(1402) in 16S rRNA + S-adenosyl-L-homocysteine + H(+). Its function is as follows. Specifically methylates the N4 position of cytidine in position 1402 (C1402) of 16S rRNA. This Enterococcus hirae protein is Ribosomal RNA small subunit methyltransferase H.